A 301-amino-acid chain; its full sequence is GTPase Era (301 aa).

Residues 7–175 form the Era-type G domain; sequence YCGFVAIVGR…AAIVRKHLPE (169 aa). The segment at 15 to 22 is G1; the sequence is GRPNVGKS. 15 to 22 provides a ligand contact to GTP; that stretch reads GRPNVGKS. The segment at 41 to 45 is G2; sequence QTTRH. A G3 region spans residues 62 to 65; the sequence is DTPG. GTP contacts are provided by residues 62-66 and 124-127; these read DTPGL and NKVD. The tract at residues 124–127 is G4; it reads NKVD. The tract at residues 154-156 is G5; it reads ISA. In terms of domain architecture, KH type-2 spans 206-283; the sequence is LGAELPYSVT…HLELWVKVKS (78 aa).

It belongs to the TRAFAC class TrmE-Era-EngA-EngB-Septin-like GTPase superfamily. Era GTPase family. As to quaternary structure, monomer.

The protein resides in the cytoplasm. The protein localises to the cell inner membrane. In terms of biological role, an essential GTPase that binds both GDP and GTP, with rapid nucleotide exchange. Plays a role in 16S rRNA processing and 30S ribosomal subunit biogenesis and possibly also in cell cycle regulation and energy metabolism. The sequence is that of GTPase Era from Klebsiella pneumoniae subsp. pneumoniae (strain ATCC 700721 / MGH 78578).